The chain runs to 649 residues: Protein PSK SIMULATOR 3 (649 aa).

Gly-2 is lipidated: N-myristoyl glycine. Residues 18-43 (SGSSVADDGREPDFGHSQPNGQTSLI) are disordered.

It localises to the nucleus. Its function is as follows. Promotes plant growth, especially at the vegetative stage, probably via the regulation of phytosulfokine (PSK) signaling; PSK are peptide phytohormones acting as growth factors. Together with PSI2 and PSI3, required during vegetative growth and reproduction. May also have a function in carbohydrate metabolism. The protein is Protein PSK SIMULATOR 3 of Arabidopsis thaliana (Mouse-ear cress).